A 209-amino-acid polypeptide reads, in one-letter code: Kynurenine formamidase (209 aa).

Phenylalanine 19 is a substrate binding site. Zn(2+) is bound by residues histidine 49, histidine 53, and aspartate 55. Histidine 59 functions as the Proton donor/acceptor in the catalytic mechanism. Zn(2+) is bound by residues histidine 160 and glutamate 172.

The protein belongs to the Cyclase 1 superfamily. KynB family. In terms of assembly, homodimer. Zn(2+) serves as cofactor.

The catalysed reaction is N-formyl-L-kynurenine + H2O = L-kynurenine + formate + H(+). Its pathway is amino-acid degradation; L-tryptophan degradation via kynurenine pathway; L-kynurenine from L-tryptophan: step 2/2. Its function is as follows. Catalyzes the hydrolysis of N-formyl-L-kynurenine to L-kynurenine, the second step in the kynurenine pathway of tryptophan degradation. The chain is Kynurenine formamidase from Delftia acidovorans (strain DSM 14801 / SPH-1).